The sequence spans 572 residues: Nucleolin 1 (572 aa).

Disordered regions lie at residues 1–312 and 488–572; these read MGKA…ESAT and DEAK…FGDE. Residues 7 to 21 are compositionally biased toward low complexity; that stretch reads KSVAVAVAPAAVPAK. Residues 27-38 show a composition bias toward basic and acidic residues; that stretch reads KREAEDEIEKAV. Low complexity-rich tracts occupy residues 45–58 and 72–81; these read AAAA…PAPK and KAASSSSGSS. Acidic residues-rich tracts occupy residues 82–91, 109–122, 144–156, 177–191, 208–222, 235–247, and 261–276; these read SEEDSSESEE, SSDE…DDED, SESD…DEDE, DSSE…SDED, STDG…EDED, SDEE…ESSD, and ESSE…EEDE. Residues 300 to 311 show a composition bias toward polar residues; the sequence is PASNQSQGTESA. 2 RRM domains span residues 311-387 and 411-492; these read ATLF…LAHE and QSIF…EAKP. Composition is skewed to basic and acidic residues over residues 488–520 and 528–545; these read DEAK…DRFG and GGRD…DGGR. Over residues 553 to 566 the composition is skewed to polar residues; sequence QSRQSAGTASTGKK.

The protein localises to the nucleus. It is found in the nucleolus. In terms of biological role, involved in pre-rRNA processing and ribosome assembly. The chain is Nucleolin 1 from Oryza sativa subsp. japonica (Rice).